A 706-amino-acid polypeptide reads, in one-letter code: Protein-glutamine gamma-glutamyltransferase 6 (706 aa).

Residues A223, N226, and N228 each contribute to the Ca(2+) site. The active site involves C274. 5 residues coordinate Ca(2+): D303, D305, N307, S309, and D327. Active-site residues include H333 and D356. Residues N396, T417, E445, and E450 each coordinate Ca(2+).

It belongs to the transglutaminase superfamily. Transglutaminase family. Requires Ca(2+) as cofactor.

It localises to the cytoplasm. It carries out the reaction L-glutaminyl-[protein] + L-lysyl-[protein] = [protein]-L-lysyl-N(6)-5-L-glutamyl-[protein] + NH4(+). Catalyzes the cross-linking of proteins and the conjugation of polyamines to proteins. The sequence is that of Protein-glutamine gamma-glutamyltransferase 6 (TGM6) from Homo sapiens (Human).